Consider the following 257-residue polypeptide: UPF0246 protein Shewmr4_2963 (257 aa).

This sequence belongs to the UPF0246 family.

The polypeptide is UPF0246 protein Shewmr4_2963 (Shewanella sp. (strain MR-4)).